The following is a 639-amino-acid chain: ATP-dependent zinc metalloprotease FtsH (639 aa).

Residues 1 to 15 (MDNEKQASPPPAAPP) are Cytoplasmic-facing. A helical membrane pass occupies residues 16 to 36 (LNWRYLLWIILLGIFLISWLG). Residues 37–123 (NAGRQAGDEI…VQAKSEEPSL (87 aa)) lie on the Periplasmic side of the membrane. A helical transmembrane segment spans residues 124-144 (WMQAIIGILPWFLILGLIFYV). Over 145 to 639 (SYRMQQRMMG…HNEAVATGAG (495 aa)) the chain is Cytoplasmic. 221–228 (GRPGTGKT) provides a ligand contact to ATP. His442 lines the Zn(2+) pocket. Glu443 is an active-site residue. His446 and Asp518 together coordinate Zn(2+).

This sequence in the central section; belongs to the AAA ATPase family. The protein in the C-terminal section; belongs to the peptidase M41 family. As to quaternary structure, homohexamer. Zn(2+) serves as cofactor.

The protein localises to the cell inner membrane. Functionally, acts as a processive, ATP-dependent zinc metallopeptidase for both cytoplasmic and membrane proteins. Plays a role in the quality control of integral membrane proteins. This chain is ATP-dependent zinc metalloprotease FtsH, found in Nitrosococcus oceani (strain ATCC 19707 / BCRC 17464 / JCM 30415 / NCIMB 11848 / C-107).